Consider the following 375-residue polypeptide: tRNA/tmRNA (uracil-C(5))-methyltransferase (375 aa).

Residues Gln-197, Tyr-225, Asn-230, Glu-246, and Asp-306 each contribute to the S-adenosyl-L-methionine site. Residue Cys-331 is the Nucleophile of the active site. The active-site Proton acceptor is Glu-365.

The protein belongs to the class I-like SAM-binding methyltransferase superfamily. RNA M5U methyltransferase family. TrmA subfamily.

It catalyses the reaction uridine(54) in tRNA + S-adenosyl-L-methionine = 5-methyluridine(54) in tRNA + S-adenosyl-L-homocysteine + H(+). It carries out the reaction uridine(341) in tmRNA + S-adenosyl-L-methionine = 5-methyluridine(341) in tmRNA + S-adenosyl-L-homocysteine + H(+). Its function is as follows. Dual-specificity methyltransferase that catalyzes the formation of 5-methyluridine at position 54 (m5U54) in all tRNAs, and that of position 341 (m5U341) in tmRNA (transfer-mRNA). The sequence is that of tRNA/tmRNA (uracil-C(5))-methyltransferase from Aliarcobacter butzleri (strain RM4018) (Arcobacter butzleri).